Consider the following 448-residue polypeptide: Putative diacyglycerol O-acyltransferase MT3848 (448 aa).

The Proton acceptor role is filled by His-136.

Belongs to the long-chain O-acyltransferase family.

The enzyme catalyses an acyl-CoA + a 1,2-diacyl-sn-glycerol = a triacyl-sn-glycerol + CoA. The protein operates within glycerolipid metabolism; triacylglycerol biosynthesis. The polypeptide is Putative diacyglycerol O-acyltransferase MT3848 (Mycobacterium tuberculosis (strain CDC 1551 / Oshkosh)).